Reading from the N-terminus, the 205-residue chain is Small ribosomal subunit protein uS4 (205 aa).

Residues 20–44 form a disordered region; sequence WGRPKSPVNRREYGPGQHGQRRKGK. Positions 94–154 constitute an S4 RNA-binding domain; sequence SRLDAIVYRS…ERSKQLLLVL (61 aa).

It belongs to the universal ribosomal protein uS4 family. Part of the 30S ribosomal subunit. Contacts protein S5. The interaction surface between S4 and S5 is involved in control of translational fidelity.

Functionally, one of the primary rRNA binding proteins, it binds directly to 16S rRNA where it nucleates assembly of the body of the 30S subunit. In terms of biological role, with S5 and S12 plays an important role in translational accuracy. The polypeptide is Small ribosomal subunit protein uS4 (Bartonella bacilliformis (strain ATCC 35685 / KC583 / Herrer 020/F12,63)).